Here is a 206-residue protein sequence, read N- to C-terminus: Large ribosomal subunit protein mL62 (206 aa).

The N-terminal 29 residues, 1 to 29 (MATAWCLPWTLRRAGAWLLTPPLRCPRRA), are a transit peptide targeting the mitochondrion.

Belongs to the prokaryotic/mitochondrial release factor family. Mitochondrion-specific ribosomal protein mL62 subfamily. In terms of assembly, component of the mitochondrial 39S ribosomal subunit.

The protein localises to the mitochondrion. It catalyses the reaction an N-acyl-L-alpha-aminoacyl-tRNA + H2O = an N-acyl-L-amino acid + a tRNA + H(+). In terms of biological role, essential peptidyl-tRNA hydrolase component of the mitochondrial large ribosomal subunit. Acts as a codon-independent translation release factor that has lost all stop codon specificity and directs the termination of translation in mitochondrion, possibly in case of abortive elongation. May be involved in the hydrolysis of peptidyl-tRNAs that have been prematurely terminated and thus in the recycling of stalled mitochondrial ribosomes. This chain is Large ribosomal subunit protein mL62, found in Ailuropoda melanoleuca (Giant panda).